A 172-amino-acid chain; its full sequence is Epithelial membrane protein 2 (172 aa).

The next 4 helical transmembrane spans lie at 1–21 (MLVI…LLFI), 72–92 (TMIL…LQLF), 100–120 (FVLT…GASV), and 148–168 (FILA…YMIL).

This sequence belongs to the PMP-22/EMP/MP20 family. Interacts with PTK2; regulates PTK2 activation and localization. Interacts with ITGB3; regulates the levels of the heterodimer ITGA5-ITGB3 integrin surface expression. Interacts with P2RX7 (via C-terminus). Interacts with ITGB1; the interaction may be direct or indirect and ITGB1 has a heterodimer form. In terms of tissue distribution, expressed in glomeruli.

Its subcellular location is the golgi apparatus membrane. It localises to the cell membrane. The protein resides in the apical cell membrane. It is found in the membrane raft. The protein localises to the cytoplasm. Its subcellular location is the nucleus. It localises to the perinuclear region. Its function is as follows. Functions as a key regulator of cell membrane composition by regulating protein surface expression. Also, plays a role in regulation of processes including cell migration, cell proliferation, cell contraction and cell adhesion. Regulates transepithelial migration of neutrophils into the alveolar lumen, potentially via mediation of cell surface expression of adhesion markers and lipid raft formation. Negatively regulates caveolae formation by reducing CAV1 expression and CAV1 amount by increasing lysosomal degradation. Facilitates surface trafficking and the formation of lipid rafts bearing GPI-anchor proteins. Regulates surface expression of MHC1 and ICAM1 proteins increasing susceptibility to T-cell mediated cytotoxicity. Regulates the plasma membrane expression of the integrin heterodimers ITGA6-ITGB1, ITGA5-ITGB3 and ITGA5-ITGB1 resulting in modulation of cell-matrix adhesion. Also regulates many processes through PTK2. Regulates blood vessel endothelial cell migration and angiogenesis by regulating VEGF protein expression through PTK2 activation. Regulates cell migration and cell contraction through PTK2 and SRC activation. Regulates focal adhesion density, F-actin conformation and cell adhesion capacity through interaction with PTK2. Positively regulates cell proliferation. Plays a role during cell death and cell blebbing. Promotes angiogenesis and vasculogenesis through induction of VEGFA via a HIF1A-dependent pathway. Also plays a role in embryo implantation by regulating surface trafficking of integrin heterodimer ITGA5-ITGB3. Plays a role in placental angiogenesis and uterine natural killer cell regulation at the maternal-fetal placental interface, however not required in the maternal tissues for a viable pregnancy. Involved in the early stages of embryogenic development and cardiogenesis, potentially via regulation of epithelial-mesenchymal transition timing. May play a role in glomerular filtration. This is Epithelial membrane protein 2 (Emp2) from Rattus norvegicus (Rat).